Here is a 382-residue protein sequence, read N- to C-terminus: Saccharopine dehydrogenase [NAD(+), L-lysine-forming] (382 aa).

L-saccharopine-binding residues include Arg20 and Lys79. Lys79 acts as the Proton acceptor in catalysis. The active-site Proton donor is the His98. Gln103 contacts L-saccharopine. Arg132 is a binding site for NAD(+). L-saccharopine-binding residues include Arg133 and Phe137. NAD(+)-binding positions include 215-216, Asp239, Thr243, Tyr263, and Val290; that span reads GR. An intrachain disulfide couples Cys217 to Cys261. Residue 291-293 coordinates L-saccharopine; that stretch reads SAD. 330-333 contacts NAD(+); it reads IDHL.

Belongs to the AlaDH/PNT family. In terms of assembly, monomer.

It catalyses the reaction L-saccharopine + NAD(+) + H2O = L-lysine + 2-oxoglutarate + NADH + H(+). Its pathway is amino-acid biosynthesis; L-lysine biosynthesis via AAA pathway; L-lysine from L-alpha-aminoadipate (fungal route): step 3/3. Functionally, catalyzes the NAD(+)-dependent cleavage of saccharopine to L-lysine and 2-oxoglutarate, the final step in the alpha-aminoadipate (AAA) pathway for lysin biosynthesis. This chain is Saccharopine dehydrogenase [NAD(+), L-lysine-forming], found in Candida albicans (strain SC5314 / ATCC MYA-2876) (Yeast).